The following is a 366-amino-acid chain: tRNA pseudouridine synthase B (366 aa).

Asp-44 (nucleophile) is an active-site residue.

This sequence belongs to the pseudouridine synthase TruB family. Type 1 subfamily.

It carries out the reaction uridine(55) in tRNA = pseudouridine(55) in tRNA. Responsible for synthesis of pseudouridine from uracil-55 in the psi GC loop of transfer RNAs. The protein is tRNA pseudouridine synthase B of Treponema pallidum (strain Nichols).